An 80-amino-acid chain; its full sequence is Large ribosomal subunit protein bL31B (80 aa).

The protein belongs to the bacterial ribosomal protein bL31 family. Type B subfamily. Part of the 50S ribosomal subunit.

The chain is Large ribosomal subunit protein bL31B from Oenococcus oeni (strain ATCC BAA-331 / PSU-1).